A 394-amino-acid chain; its full sequence is NAD(P)H-quinone oxidoreductase subunit H (394 aa).

The protein belongs to the complex I 49 kDa subunit family. In terms of assembly, NDH-1 can be composed of about 15 different subunits; different subcomplexes with different compositions have been identified which probably have different functions.

It localises to the cellular thylakoid membrane. The enzyme catalyses a plastoquinone + NADH + (n+1) H(+)(in) = a plastoquinol + NAD(+) + n H(+)(out). It carries out the reaction a plastoquinone + NADPH + (n+1) H(+)(in) = a plastoquinol + NADP(+) + n H(+)(out). Its function is as follows. NDH-1 shuttles electrons from an unknown electron donor, via FMN and iron-sulfur (Fe-S) centers, to quinones in the respiratory and/or the photosynthetic chain. The immediate electron acceptor for the enzyme in this species is believed to be plastoquinone. Couples the redox reaction to proton translocation, and thus conserves the redox energy in a proton gradient. Cyanobacterial NDH-1 also plays a role in inorganic carbon-concentration. The chain is NAD(P)H-quinone oxidoreductase subunit H from Synechococcus sp. (strain WH7803).